A 251-amino-acid chain; its full sequence is Demethylmenaquinone methyltransferase (251 aa).

Residues Thr66, Asp87, and 115–116 (NA) contribute to the S-adenosyl-L-methionine site.

It belongs to the class I-like SAM-binding methyltransferase superfamily. MenG/UbiE family.

The catalysed reaction is a 2-demethylmenaquinol + S-adenosyl-L-methionine = a menaquinol + S-adenosyl-L-homocysteine + H(+). Its pathway is quinol/quinone metabolism; menaquinone biosynthesis; menaquinol from 1,4-dihydroxy-2-naphthoate: step 2/2. Its function is as follows. Methyltransferase required for the conversion of demethylmenaquinol (DMKH2) to menaquinol (MKH2). The sequence is that of Demethylmenaquinone methyltransferase from Symbiobacterium thermophilum (strain DSM 24528 / JCM 14929 / IAM 14863 / T).